Reading from the N-terminus, the 514-residue chain is Putative thymidine phosphorylase (514 aa).

It belongs to the thymidine/pyrimidine-nucleoside phosphorylase family. Type 2 subfamily.

It carries out the reaction thymidine + phosphate = 2-deoxy-alpha-D-ribose 1-phosphate + thymine. This is Putative thymidine phosphorylase from Sphingopyxis alaskensis (strain DSM 13593 / LMG 18877 / RB2256) (Sphingomonas alaskensis).